The following is a 686-amino-acid chain: DNA ligase (686 aa).

Residues Asp31 to Asp35, Ser80 to Leu81, and Glu109 each bind NAD(+). Residue Lys111 is the N6-AMP-lysine intermediate of the active site. The NAD(+) site is built by Arg132, Glu166, Lys280, and Lys304. 4 residues coordinate Zn(2+): Cys430, Cys433, Cys448, and Cys453. The BRCT domain maps to Asn611–Leu686.

Belongs to the NAD-dependent DNA ligase family. LigA subfamily. Mg(2+) is required as a cofactor. It depends on Mn(2+) as a cofactor.

It carries out the reaction NAD(+) + (deoxyribonucleotide)n-3'-hydroxyl + 5'-phospho-(deoxyribonucleotide)m = (deoxyribonucleotide)n+m + AMP + beta-nicotinamide D-nucleotide.. Functionally, DNA ligase that catalyzes the formation of phosphodiester linkages between 5'-phosphoryl and 3'-hydroxyl groups in double-stranded DNA using NAD as a coenzyme and as the energy source for the reaction. It is essential for DNA replication and repair of damaged DNA. The polypeptide is DNA ligase (Lactococcus lactis subsp. cremoris (strain SK11)).